A 415-amino-acid chain; its full sequence is G patch domain-containing protein 4 (415 aa).

Met-1 bears the N-acetylmethionine mark. Thr-4 bears the Phosphothreonine mark. One can recognise a G-patch domain in the interval 11–57 (GMKFAEEQLLKHGWTQGKGLGRRENGITQALKVTLKQDNHGVGHDPA). Lys-46 participates in a covalent cross-link: Glycyl lysine isopeptide (Lys-Gly) (interchain with G-Cter in SUMO2). At Thr-116 the chain carries Phosphothreonine. Disordered stretches follow at residues 116–141 (TSGE…TPPK) and 191–415 (LGTS…VDLS). Positions 118 to 141 (GEEKPDRDLGNCSDVDNHEPTPPK) are enriched in basic and acidic residues. Ser-130 carries the post-translational modification Phosphoserine. Residues 191–201 (LGTSQPLTDSE) are compositionally biased toward polar residues. Positions 224-239 (SLGDELLGHTDRSFRD) are enriched in basic and acidic residues. Position 258 is a phosphoserine (Ser-258). A compositionally biased stretch (acidic residues) spans 335-345 (EDLDTQEEEGK). Over residues 353-364 (RKVRRKDKRKRQ) the composition is skewed to basic residues. Residues 387–397 (AGERSRQYPKE) are compositionally biased toward basic and acidic residues. The span at 398–407 (RAKKKKRKRD) shows a compositional bias: basic residues.

This is G patch domain-containing protein 4 (Gpatch4) from Mus musculus (Mouse).